Here is a 248-residue protein sequence, read N- to C-terminus: Large ribosomal subunit protein uL10m (248 aa).

A mitochondrion-targeting transit peptide spans 1-24 (MATLIQRSLSLAKSSTPALQFLRF).

The protein belongs to the universal ribosomal protein uL10 family. Component of the mitochondrial ribosome large subunit (39S) which comprises a 16S rRNA and about 50 distinct proteins.

The protein resides in the mitochondrion. This is Large ribosomal subunit protein uL10m (mRpL10) from Drosophila melanogaster (Fruit fly).